Consider the following 182-residue polypeptide: Large ribosomal subunit protein uL5 (182 aa).

The protein belongs to the universal ribosomal protein uL5 family. As to quaternary structure, part of the 50S ribosomal subunit; part of the 5S rRNA/L5/L18/L25 subcomplex. Contacts the 5S rRNA and the P site tRNA. Forms a bridge to the 30S subunit in the 70S ribosome.

This is one of the proteins that bind and probably mediate the attachment of the 5S RNA into the large ribosomal subunit, where it forms part of the central protuberance. In the 70S ribosome it contacts protein S13 of the 30S subunit (bridge B1b), connecting the 2 subunits; this bridge is implicated in subunit movement. Contacts the P site tRNA; the 5S rRNA and some of its associated proteins might help stabilize positioning of ribosome-bound tRNAs. This chain is Large ribosomal subunit protein uL5, found in Thermus thermophilus (strain ATCC BAA-163 / DSM 7039 / HB27).